Here is a 57-residue protein sequence, read N- to C-terminus: Small ribosomal subunit protein eS27 (57 aa).

Residues Cys10, Cys13, Cys29, and Cys32 each coordinate Zn(2+). The segment at 10-32 adopts a C4-type zinc-finger fold; that stretch reads CPDCENEQSLFEKAASEVSCAVC.

This sequence belongs to the eukaryotic ribosomal protein eS27 family. In terms of assembly, part of the 30S ribosomal subunit. It depends on Zn(2+) as a cofactor.

This Haloarcula marismortui (strain ATCC 43049 / DSM 3752 / JCM 8966 / VKM B-1809) (Halobacterium marismortui) protein is Small ribosomal subunit protein eS27.